Consider the following 137-residue polypeptide: Basic phospholipase A2 beta-bungarotoxin A-AL4 chain (137 aa).

The N-terminal stretch at Leu-1–Ala-10 is a signal peptide. Residues Ala-11–Leu-18 constitute a propeptide that is removed on maturation. 6 cysteine pairs are disulfide-bonded: Cys-45/Cys-137, Cys-47/Cys-63, Cys-62/Cys-118, Cys-69/Cys-111, Cys-79/Cys-104, and Cys-97/Cys-109. Ca(2+)-binding residues include Tyr-46, Gly-48, and Gly-50. His-66 is an active-site residue. Residue Asp-67 participates in Ca(2+) binding. The active site involves Asp-112.

It belongs to the phospholipase A2 family. Group I subfamily. D49 sub-subfamily. In terms of assembly, heterodimer; disulfide-linked. The A chains have phospholipase A2 activity and the B chains show homology with the basic protease inhibitors. Ca(2+) is required as a cofactor. As to expression, expressed by the venom gland.

It localises to the secreted. It carries out the reaction a 1,2-diacyl-sn-glycero-3-phosphocholine + H2O = a 1-acyl-sn-glycero-3-phosphocholine + a fatty acid + H(+). In terms of biological role, snake venom phospholipase A2 (PLA2) that inhibits neuromuscular transmission by blocking acetylcholine release from the nerve termini. PLA2 catalyzes the calcium-dependent hydrolysis of the 2-acyl groups in 3-sn-phosphoglycerides. This is Basic phospholipase A2 beta-bungarotoxin A-AL4 chain from Bungarus multicinctus (Many-banded krait).